The sequence spans 352 residues: Homeobox protein Mohawk (352 aa).

The interval 19 to 53 is disordered; the sequence is GASERERGGRPYSGVLDSPHARPEVGIADGPPLKD. The segment at residues 71–132 is a DNA-binding region (homeobox; TALE-type); sequence VRHKRQALQD…NARRRLKNTV (62 aa). Disordered stretches follow at residues 157-194 and 245-272; these read LSVS…IKSE and TRQR…SETE.

This sequence belongs to the TALE/IRO homeobox family.

It is found in the nucleus. In terms of biological role, may act as a morphogenetic regulator of cell adhesion. The polypeptide is Homeobox protein Mohawk (MKX) (Pongo abelii (Sumatran orangutan)).